The primary structure comprises 1018 residues: 2-oxoglutarate dehydrogenase-like, mitochondrial (1018 aa).

3 residues coordinate Ca(2+): His138, Asp151, and Asp153. The thiamine diphosphate site is built by Arg307, Asp406, Asn439, Ile441, and Gln671. 3 residues coordinate Mg(2+): Asp406, Asn439, and Ile441.

This sequence belongs to the alpha-ketoglutarate dehydrogenase family. As to quaternary structure, the OGDHC complex comprises multiple copies of three catalytic enzyme components, the 2-oxoglutarate dehydrogenase (OGDH/E1), the dihydrolipoamide dehydrogenase (DLST/E2) and the dihydrolipoamide dehydrogenase (DLD/E3). OGDHL/E1-like isoenzyme may replace OGDH in the OGDHC complex in the brain. It depends on thiamine diphosphate as a cofactor. Requires Mg(2+) as cofactor.

The protein resides in the mitochondrion matrix. It carries out the reaction N(6)-[(R)-lipoyl]-L-lysyl-[protein] + 2-oxoglutarate + H(+) = N(6)-[(R)-S(8)-succinyldihydrolipoyl]-L-lysyl-[protein] + CO2. In terms of biological role, 2-oxoglutarate dehydrogenase (E1-like) component of the 2-oxoglutarate dehydrogenase multienzyme complex (OGDHC) which mediates the decarboxylation of alpha-ketoglutarate in the tricarboxylic acid cycle. The OGDHC complex catalyzes the overall conversion of 2-oxoglutarate to succinyl-CoA and CO(2) while reducing NAD(+) to NADH. The OGDHC complex is mainly active in the mitochondrion. Involved in the inhibition of cell proliferation and in apoptosis. This is 2-oxoglutarate dehydrogenase-like, mitochondrial (ogdhl) from Xenopus laevis (African clawed frog).